The chain runs to 183 residues: Beta-defensin 129 (183 aa).

The first 19 residues, 1–19, serve as a signal peptide directing secretion; sequence MKLLFPIFASLMLQYQVNT. 3 disulfides stabilise this stretch: cysteine 27–cysteine 53, cysteine 34–cysteine 48, and cysteine 38–cysteine 54. Residues 141 to 183 form a disordered region; sequence TATSTKSNTKESRDSATASPPPAPPPPNILPTPSLELEEAEEQ. The span at 159-170 shows a compositional bias: pro residues; the sequence is SPPPAPPPPNIL.

Belongs to the beta-defensin family.

Its subcellular location is the secreted. Has antibacterial activity. In Pan troglodytes (Chimpanzee), this protein is Beta-defensin 129 (DEFB129).